The primary structure comprises 129 residues: Small ribosomal subunit protein uS11 (129 aa).

The protein belongs to the universal ribosomal protein uS11 family. In terms of assembly, part of the 30S ribosomal subunit. Interacts with proteins S7 and S18. Binds to IF-3.

Functionally, located on the platform of the 30S subunit, it bridges several disparate RNA helices of the 16S rRNA. Forms part of the Shine-Dalgarno cleft in the 70S ribosome. The protein is Small ribosomal subunit protein uS11 of Buchnera aphidicola subsp. Baizongia pistaciae (strain Bp).